Here is a 711-residue protein sequence, read N- to C-terminus: DNA ligase (711 aa).

Residues 1-21 (MNATHRGAQADASAPAGGLPP) are disordered. The span at 10-21 (ADASAPAGGLPP) shows a compositional bias: low complexity. NAD(+)-binding positions include 52 to 56 (DAEYD), 101 to 102 (SL), and E146. Residue K148 is the N6-AMP-lysine intermediate of the active site. Positions 169, 205, 322, and 346 each coordinate NAD(+). C440, C443, C458, and C464 together coordinate Zn(2+). The region spanning 623 to 711 (RAPAPLAGKT…VGAGQPGEQS (89 aa)) is the BRCT domain.

This sequence belongs to the NAD-dependent DNA ligase family. LigA subfamily. It depends on Mg(2+) as a cofactor. Requires Mn(2+) as cofactor.

The enzyme catalyses NAD(+) + (deoxyribonucleotide)n-3'-hydroxyl + 5'-phospho-(deoxyribonucleotide)m = (deoxyribonucleotide)n+m + AMP + beta-nicotinamide D-nucleotide.. Functionally, DNA ligase that catalyzes the formation of phosphodiester linkages between 5'-phosphoryl and 3'-hydroxyl groups in double-stranded DNA using NAD as a coenzyme and as the energy source for the reaction. It is essential for DNA replication and repair of damaged DNA. This Cupriavidus pinatubonensis (strain JMP 134 / LMG 1197) (Cupriavidus necator (strain JMP 134)) protein is DNA ligase.